The primary structure comprises 638 residues: Threonine--tRNA ligase (638 aa).

The region spanning 1–61 (MPVITLPDGS…EHDARIEIVT (61 aa)) is the TGS domain. The interval 243–534 (DHRKIAKAQD…LIEEYAGHFP (292 aa)) is catalytic. Zn(2+)-binding residues include Cys-334, His-385, and His-511.

Belongs to the class-II aminoacyl-tRNA synthetase family. In terms of assembly, homodimer. The cofactor is Zn(2+).

It localises to the cytoplasm. It carries out the reaction tRNA(Thr) + L-threonine + ATP = L-threonyl-tRNA(Thr) + AMP + diphosphate + H(+). In terms of biological role, catalyzes the attachment of threonine to tRNA(Thr) in a two-step reaction: L-threonine is first activated by ATP to form Thr-AMP and then transferred to the acceptor end of tRNA(Thr). Also edits incorrectly charged L-seryl-tRNA(Thr). The sequence is that of Threonine--tRNA ligase from Idiomarina loihiensis (strain ATCC BAA-735 / DSM 15497 / L2-TR).